A 153-amino-acid polypeptide reads, in one-letter code: Ribosome maturation factor RimP (153 aa).

This sequence belongs to the RimP family.

The protein localises to the cytoplasm. Its function is as follows. Required for maturation of 30S ribosomal subunits. The chain is Ribosome maturation factor RimP from Coxiella burnetii (strain RSA 331 / Henzerling II).